Here is a 70-residue protein sequence, read N- to C-terminus: MPREIKDIKDFLLKARRKDAKSVKIKKNQQNVKFKVRCSRFLYTLVITDKEKAEKLKQSLPPGLQVKEVK.

It belongs to the eukaryotic ribosomal protein eL38 family.

The polypeptide is Large ribosomal subunit protein eL38 (RpL38) (Spodoptera frugiperda (Fall armyworm)).